The chain runs to 287 residues: ATP synthase gamma chain (287 aa).

It belongs to the ATPase gamma chain family. F-type ATPases have 2 components, CF(1) - the catalytic core - and CF(0) - the membrane proton channel. CF(1) has five subunits: alpha(3), beta(3), gamma(1), delta(1), epsilon(1). CF(0) has three main subunits: a, b and c.

The protein localises to the cell membrane. Produces ATP from ADP in the presence of a proton gradient across the membrane. The gamma chain is believed to be important in regulating ATPase activity and the flow of protons through the CF(0) complex. The protein is ATP synthase gamma chain of Brevibacillus brevis (strain 47 / JCM 6285 / NBRC 100599).